The following is a 347-amino-acid chain: Phenylalanine--tRNA ligase alpha subunit (347 aa).

The disordered stretch occupies residues 83-111 (QNLSGGDDSGADPTFDPTLPGTRPSLGHI). E274 is a Mg(2+) binding site.

It belongs to the class-II aminoacyl-tRNA synthetase family. Phe-tRNA synthetase alpha subunit type 1 subfamily. As to quaternary structure, tetramer of two alpha and two beta subunits. The cofactor is Mg(2+).

The protein resides in the cytoplasm. The enzyme catalyses tRNA(Phe) + L-phenylalanine + ATP = L-phenylalanyl-tRNA(Phe) + AMP + diphosphate + H(+). This is Phenylalanine--tRNA ligase alpha subunit from Rhodopirellula baltica (strain DSM 10527 / NCIMB 13988 / SH1).